We begin with the raw amino-acid sequence, 916 residues long: Translation initiation factor IF-2 (916 aa).

The interval 55–324 (EPKAVTPTSK…NHNANLKPVT (270 aa)) is disordered. The span at 77 to 88 (AAEPKAAATKPA) shows a compositional bias: low complexity. Composition is skewed to basic and acidic residues over residues 98 to 121 (FKAEREARAKAEAERRQNNGERRN), 129 to 161 (RQKDNRNHGSQDRRNDNRNNRNRQNDNRRDNRN), and 198 to 212 (RQSETRFHEAQEAKR). Over residues 227 to 250 (KEQPTVEAAATAAPQAQPQTVEQV) the composition is skewed to low complexity. The span at 264–281 (ARPDKSRDFSHENEDGPK) shows a compositional bias: basic and acidic residues. Low complexity predominate over residues 291–304 (KQNQVRNQKNSNWN). Basic residues predominate over residues 305 to 314 (KKNKKSKNNR). The tr-type G domain maps to 418 to 585 (ERAPVVTIMG…TVLLVAEIQE (168 aa)). Residues 427-434 (GHVDHGKT) are G1. 427 to 434 (GHVDHGKT) is a GTP binding site. The tract at residues 452–456 (GITQH) is G2. Residues 473-476 (DTPG) form a G3 region. GTP-binding positions include 473–477 (DTPGH) and 527–530 (NKID). The interval 527–530 (NKID) is G4. Residues 563–565 (SAK) are G5.

The protein belongs to the TRAFAC class translation factor GTPase superfamily. Classic translation factor GTPase family. IF-2 subfamily.

It is found in the cytoplasm. In terms of biological role, one of the essential components for the initiation of protein synthesis. Protects formylmethionyl-tRNA from spontaneous hydrolysis and promotes its binding to the 30S ribosomal subunits. Also involved in the hydrolysis of GTP during the formation of the 70S ribosomal complex. In Streptococcus mutans serotype c (strain ATCC 700610 / UA159), this protein is Translation initiation factor IF-2.